Here is a 647-residue protein sequence, read N- to C-terminus: Exoribonuclease 2 (647 aa).

In terms of domain architecture, RNB spans 191–517 (REDLCALPFV…VNHRLLKALI (327 aa)). In terms of domain architecture, S1 motif spans 563–645 (PTPFNAEIID…DTRSLIARPF (83 aa)).

The protein belongs to the RNR ribonuclease family. RNase II subfamily.

The protein localises to the cytoplasm. The enzyme catalyses Exonucleolytic cleavage in the 3'- to 5'-direction to yield nucleoside 5'-phosphates.. Involved in mRNA degradation. Hydrolyzes single-stranded polyribonucleotides processively in the 3' to 5' direction. The sequence is that of Exoribonuclease 2 from Edwardsiella piscicida.